The chain runs to 180 residues: ATP synthase subunit delta (180 aa).

This sequence belongs to the ATPase delta chain family. F-type ATPases have 2 components, F(1) - the catalytic core - and F(0) - the membrane proton channel. F(1) has five subunits: alpha(3), beta(3), gamma(1), delta(1), epsilon(1). F(0) has three main subunits: a(1), b(2) and c(10-14). The alpha and beta chains form an alternating ring which encloses part of the gamma chain. F(1) is attached to F(0) by a central stalk formed by the gamma and epsilon chains, while a peripheral stalk is formed by the delta and b chains.

It is found in the cell membrane. In terms of biological role, f(1)F(0) ATP synthase produces ATP from ADP in the presence of a proton or sodium gradient. F-type ATPases consist of two structural domains, F(1) containing the extramembraneous catalytic core and F(0) containing the membrane proton channel, linked together by a central stalk and a peripheral stalk. During catalysis, ATP synthesis in the catalytic domain of F(1) is coupled via a rotary mechanism of the central stalk subunits to proton translocation. This protein is part of the stalk that links CF(0) to CF(1). It either transmits conformational changes from CF(0) to CF(1) or is implicated in proton conduction. The chain is ATP synthase subunit delta from Leuconostoc citreum (strain KM20).